A 402-amino-acid chain; its full sequence is Flavohemoprotein (402 aa).

The Globin domain maps to 1-138 (MLSPEVRALV…LADLLIGRER (138 aa)). His85 serves as a coordination point for heme b. Active-site charge relay system residues include Tyr95 and Glu137. Residues 149–402 (GGWTGWRAFK…AEVFGTGGVA (254 aa)) are reductase. One can recognise an FAD-binding FR-type domain in the interval 152–261 (TGWRAFKVVR…SPPQGDFTLD (110 aa)). FAD is bound by residues Tyr190 and 206 to 209 (RQYS). 274–279 (GVGLTP) serves as a coordination point for NADP(+). 395 to 398 (VFGT) serves as a coordination point for FAD.

It belongs to the globin family. Two-domain flavohemoproteins subfamily. In the C-terminal section; belongs to the flavoprotein pyridine nucleotide cytochrome reductase family. The cofactor is heme b. It depends on FAD as a cofactor.

It carries out the reaction 2 nitric oxide + NADPH + 2 O2 = 2 nitrate + NADP(+) + H(+). It catalyses the reaction 2 nitric oxide + NADH + 2 O2 = 2 nitrate + NAD(+) + H(+). Is involved in NO detoxification in an aerobic process, termed nitric oxide dioxygenase (NOD) reaction that utilizes O(2) and NAD(P)H to convert NO to nitrate, which protects the bacterium from various noxious nitrogen compounds. Therefore, plays a central role in the inducible response to nitrosative stress. This Bordetella pertussis (strain Tohama I / ATCC BAA-589 / NCTC 13251) protein is Flavohemoprotein.